The primary structure comprises 305 residues: Olfactory receptor 4X1 (305 aa).

Residues 1 to 23 lie on the Extracellular side of the membrane; that stretch reads MVATNNVTEIIFVGFSQNWSEQR. 2 N-linked (GlcNAc...) asparagine glycosylation sites follow: asparagine 6 and asparagine 18. A helical transmembrane segment spans residues 24–47; it reads VISVMFLLMYTAVVLGNGLIVVTI. The Cytoplasmic portion of the chain corresponds to 48-55; it reads LASKVLTS. Residues 56–77 form a helical membrane-spanning segment; sequence PMYFFLSYLSFVEICYCSVMAP. The Extracellular segment spans residues 78–98; sequence KLIFDSFIKRKVISLKGCLTQ. Cysteine 95 and cysteine 187 form a disulfide bridge. Residues 99-118 traverse the membrane as a helical segment; it reads MFSLHFFGGTEAFLLMVMAY. Residues 119-137 are Cytoplasmic-facing; the sequence is DRYVAICKPLHYMAIMNQR. Residues 138–156 form a helical membrane-spanning segment; that stretch reads MCGLLVRIAWGGGLLHSVG. Residues 157–193 lie on the Extracellular side of the membrane; sequence QTFLIFQLPFCGPNIMDHYFCDVHPVLELACADTFFI. A helical transmembrane segment spans residues 194 to 217; it reads SLLIITNGGSISVVSFFVLMASYL. Over 218-233 the chain is Cytoplasmic; that stretch reads IILHFLRSHNLEGQHK. A helical transmembrane segment spans residues 234 to 256; the sequence is ALSTCASHVTVVDLFFIPCSLVY. Topologically, residues 257-267 are extracellular; it reads IRPCVTLPADK. Residues 268–287 form a helical membrane-spanning segment; the sequence is IVAVFYTVVTPLLNPVIYSF. At 288–305 the chain is on the cytoplasmic side; sequence RNAEVKNAMRRFIGGKVI.

Belongs to the G-protein coupled receptor 1 family.

The protein localises to the cell membrane. Its function is as follows. Odorant receptor. This is Olfactory receptor 4X1 (OR4X1) from Homo sapiens (Human).